A 396-amino-acid chain; its full sequence is Elongation factor Tu (396 aa).

The region spanning 10–206 is the tr-type G domain; sequence KLHVNVGTIG…ALDTHIPNPE (197 aa). The tract at residues 19 to 26 is G1; the sequence is GHVDHGKT. 19 to 26 lines the GTP pocket; it reads GHVDHGKT. Thr-26 is a binding site for Mg(2+). The tract at residues 60-64 is G2; sequence GITIS. Residues 81–84 are G3; the sequence is DCPG. GTP is bound by residues 81–85 and 136–139; these read DCPGH and NKAD. The G4 stretch occupies residues 136 to 139; that stretch reads NKAD. Residues 174-176 are G5; it reads SAL.

It belongs to the TRAFAC class translation factor GTPase superfamily. Classic translation factor GTPase family. EF-Tu/EF-1A subfamily. As to quaternary structure, monomer.

The protein resides in the cytoplasm. It catalyses the reaction GTP + H2O = GDP + phosphate + H(+). Its function is as follows. GTP hydrolase that promotes the GTP-dependent binding of aminoacyl-tRNA to the A-site of ribosomes during protein biosynthesis. The chain is Elongation factor Tu from Xylella fastidiosa (strain 9a5c).